The sequence spans 656 residues: MPGTMQCLGAEYLVSAEKTRQREWRPQIYRKCTDTPWLVLFFLFWTGLVFIMGYSVVAGAAGRLLFGYDSFGNVCGKKNSPVEGAPLSGQDMTLKKHVFFMNACNLEVKDRGLGPTALCVSSCPEKQLDTLEEVQLFANINGSFLCVYSLNSFNYTQSSSADTLCPRLPVPPSKPFPLFNRCIPQTPECYSLFASVLINDADALHRILSGIMAGRDTILGLCVFTFALSLAMLFAFRFISTLLIHIIISLVILGLLFVCGVLWWLYYDYTNDLSTELDTEKENMNCMLAFAIISTVVTVLLLALIFTLRKRIKLTVELLHVTNKAISSCPFLLFQPLWTCAILIFFWVLWVAVLLSLGTAGTAQVMEGGQVEYKPLSGIRYMWWYHLIGLIWTSEFILACQRMTVAGAMVACYFNRNQNDPPARPILSSLFVLFCYHQGTAVKGSFLLTVTRIPRVIFMCIYSTLKEPQRSAWSRGEFRCSHCGLWCLLKYLYHLNQDAYTATAINGTDFCTSAKDAHTIIAKNSSHLTSVNCFGNFVIFLGKVLVVCFSIFGGLMAFNYSRALQVWAIPLLLVAFFACVVAHSFLSVFETALDILFLCFAVDLETNDGSSEKPYFMDPGFLSVIKRTNNLNNAKSQGQKDALPNEEGTELQPIVR.

A helical membrane pass occupies residues 37 to 57; the sequence is WLVLFFLFWTGLVFIMGYSVV. Asn141 and Asn154 each carry an N-linked (GlcNAc...) asparagine glycan. A run of 5 helical transmembrane segments spans residues 216–236, 242–262, 288–308, 337–357, and 381–401; these read DTIL…LFAF, LLIH…CGVL, LAFA…IFTL, LWTC…LLSL, and YMWW…LACQ. Residues Asn506 and Asn524 are each glycosylated (N-linked (GlcNAc...) asparagine). Residues 537 to 557 form a helical membrane-spanning segment; that stretch reads FVIFLGKVLVVCFSIFGGLMA. A glycan (N-linked (GlcNAc...) asparagine) is linked at Asn559. Residues 566–586 traverse the membrane as a helical segment; that stretch reads VWAIPLLLVAFFACVVAHSFL. The interval 634–656 is disordered; sequence AKSQGQKDALPNEEGTELQPIVR.

The protein belongs to the CTL (choline transporter-like) family.

It localises to the membrane. This is Choline transporter-like protein 3 (Slc44a3) from Mus musculus (Mouse).